The following is a 95-amino-acid chain: Small ribosomal subunit protein uS19 (95 aa).

The interval Glu-73 to Lys-95 is disordered.

Belongs to the universal ribosomal protein uS19 family.

Protein S19 forms a complex with S13 that binds strongly to the 16S ribosomal RNA. This is Small ribosomal subunit protein uS19 from Deinococcus deserti (strain DSM 17065 / CIP 109153 / LMG 22923 / VCD115).